Here is a 337-residue protein sequence, read N- to C-terminus: Anthranilate phosphoribosyltransferase (337 aa).

Residues Gly81, 84 to 85, Ser89, 91 to 94, 109 to 117, and Ala121 each bind 5-phospho-alpha-D-ribose 1-diphosphate; these read GD, NVST, and KHGNRALSS. An anthranilate-binding site is contributed by Gly81. Ser93 is a binding site for Mg(2+). Asn112 is an anthranilate binding site. Arg167 serves as a coordination point for anthranilate. Residues Asp226 and Glu227 each coordinate Mg(2+).

Belongs to the anthranilate phosphoribosyltransferase family. As to quaternary structure, homodimer. It depends on Mg(2+) as a cofactor.

It catalyses the reaction N-(5-phospho-beta-D-ribosyl)anthranilate + diphosphate = 5-phospho-alpha-D-ribose 1-diphosphate + anthranilate. It participates in amino-acid biosynthesis; L-tryptophan biosynthesis; L-tryptophan from chorismate: step 2/5. Catalyzes the transfer of the phosphoribosyl group of 5-phosphorylribose-1-pyrophosphate (PRPP) to anthranilate to yield N-(5'-phosphoribosyl)-anthranilate (PRA). The chain is Anthranilate phosphoribosyltransferase from Nitrobacter hamburgensis (strain DSM 10229 / NCIMB 13809 / X14).